The following is a 164-amino-acid chain: uncharacterized protein (164 aa).

The N-terminal stretch at 1–25 (MMKTVKHLLCCAIAASALISTGVHA) is a signal peptide.

This is an uncharacterized protein from Escherichia coli (strain K12).